The primary structure comprises 55 residues: Large ribosomal subunit protein bL32 (55 aa).

A compositionally biased stretch (basic residues) spans 1 to 19 (MAVPKRRMSRANTHSRRSQ). Residues 1-20 (MAVPKRRMSRANTHSRRSQW) are disordered.

Belongs to the bacterial ribosomal protein bL32 family.

In Corynebacterium jeikeium (strain K411), this protein is Large ribosomal subunit protein bL32.